The chain runs to 338 residues: 4-hydroxythreonine-4-phosphate dehydrogenase (338 aa).

Positions 139 and 140 each coordinate substrate. A divalent metal cation-binding residues include H169, H214, and H270. Positions 278, 287, and 296 each coordinate substrate.

Belongs to the PdxA family. Homodimer. It depends on Zn(2+) as a cofactor. Requires Mg(2+) as cofactor. The cofactor is Co(2+).

It is found in the cytoplasm. It catalyses the reaction 4-(phosphooxy)-L-threonine + NAD(+) = 3-amino-2-oxopropyl phosphate + CO2 + NADH. It participates in cofactor biosynthesis; pyridoxine 5'-phosphate biosynthesis; pyridoxine 5'-phosphate from D-erythrose 4-phosphate: step 4/5. Functionally, catalyzes the NAD(P)-dependent oxidation of 4-(phosphooxy)-L-threonine (HTP) into 2-amino-3-oxo-4-(phosphooxy)butyric acid which spontaneously decarboxylates to form 3-amino-2-oxopropyl phosphate (AHAP). This is 4-hydroxythreonine-4-phosphate dehydrogenase from Desulfosudis oleivorans (strain DSM 6200 / JCM 39069 / Hxd3) (Desulfococcus oleovorans).